Reading from the N-terminus, the 735-residue chain is 1,4-alpha-glucan branching enzyme GlgB 1 (735 aa).

D418 functions as the Nucleophile in the catalytic mechanism. The Proton donor role is filled by E471.

This sequence belongs to the glycosyl hydrolase 13 family. GlgB subfamily. Monomer.

It carries out the reaction Transfers a segment of a (1-&gt;4)-alpha-D-glucan chain to a primary hydroxy group in a similar glucan chain.. Its pathway is glycan biosynthesis; glycogen biosynthesis. Its function is as follows. Catalyzes the formation of the alpha-1,6-glucosidic linkages in glycogen by scission of a 1,4-alpha-linked oligosaccharide from growing alpha-1,4-glucan chains and the subsequent attachment of the oligosaccharide to the alpha-1,6 position. The protein is 1,4-alpha-glucan branching enzyme GlgB 1 of Rhizobium johnstonii (strain DSM 114642 / LMG 32736 / 3841) (Rhizobium leguminosarum bv. viciae).